The following is a 429-amino-acid chain: Enolase (429 aa).

Glutamine 163 is a (2R)-2-phosphoglycerate binding site. The Proton donor role is filled by glutamate 205. Mg(2+) contacts are provided by aspartate 242, glutamate 285, and aspartate 312. (2R)-2-phosphoglycerate is bound by residues lysine 337, arginine 366, serine 367, and lysine 388. Residue lysine 337 is the Proton acceptor of the active site.

This sequence belongs to the enolase family. It depends on Mg(2+) as a cofactor.

The protein localises to the cytoplasm. It is found in the secreted. The protein resides in the cell surface. The catalysed reaction is (2R)-2-phosphoglycerate = phosphoenolpyruvate + H2O. It participates in carbohydrate degradation; glycolysis; pyruvate from D-glyceraldehyde 3-phosphate: step 4/5. Catalyzes the reversible conversion of 2-phosphoglycerate (2-PG) into phosphoenolpyruvate (PEP). It is essential for the degradation of carbohydrates via glycolysis. In Methylorubrum populi (strain ATCC BAA-705 / NCIMB 13946 / BJ001) (Methylobacterium populi), this protein is Enolase.